We begin with the raw amino-acid sequence, 146 residues long: Large ribosomal subunit protein uL15 (146 aa).

The segment at 1 to 56 is disordered; it reads MSDIQLNTLKPAEGSKHAKRRVGRGIGSGLGKTAGRGHKGQKSRSGGFHKVGFEGG. Residues 24 to 34 show a composition bias toward gly residues; that stretch reads RGIGSGLGKTA.

It belongs to the universal ribosomal protein uL15 family. In terms of assembly, part of the 50S ribosomal subunit.

Binds to the 23S rRNA. This Bordetella bronchiseptica (strain ATCC BAA-588 / NCTC 13252 / RB50) (Alcaligenes bronchisepticus) protein is Large ribosomal subunit protein uL15.